The chain runs to 262 residues: Outer membrane protein assembly factor BamD (262 aa).

A signal peptide spans 1-18 (MRKIKSLALLAVAALVIG). The N-palmitoyl cysteine moiety is linked to residue C19. C19 is lipidated: S-diacylglycerol cysteine.

The protein belongs to the BamD family. Part of the Bam complex.

It localises to the cell outer membrane. Part of the outer membrane protein assembly complex, which is involved in assembly and insertion of beta-barrel proteins into the outer membrane. This chain is Outer membrane protein assembly factor BamD, found in Haemophilus influenzae (strain ATCC 51907 / DSM 11121 / KW20 / Rd).